The chain runs to 281 residues: Large ribosomal subunit protein uL22 (281 aa).

The interval Met-1–Val-225 is large ribosomal subunit protein uL22. Disordered regions lie at residues Arg-137–Ala-175 and Ala-199–Arg-281. The span at Thr-139 to Leu-153 shows a compositional bias: basic residues. Composition is skewed to low complexity over residues Pro-159–Ala-175 and Ala-199–Ala-239. Residues Ala-226–Arg-281 form a unknown region. A compositionally biased stretch (basic and acidic residues) spans Arg-261 to Asp-271. Residues Ala-272 to Arg-281 show a composition bias toward acidic residues.

The protein belongs to the universal ribosomal protein uL22 family. In terms of assembly, part of the 50S ribosomal subunit.

Its function is as follows. The globular domain of the protein is located near the polypeptide exit tunnel on the outside of the subunit, while an extended beta-hairpin is found that lines the wall of the exit tunnel in the center of the 70S ribosome. Functionally, this protein binds specifically to 23S rRNA; its binding is stimulated by other ribosomal proteins, e.g. L4, L17, and L20. It is important during the early stages of 50S assembly. It makes multiple contacts with different domains of the 23S rRNA in the assembled 50S subunit and ribosome. The polypeptide is Large ribosomal subunit protein uL22 (Acidothermus cellulolyticus (strain ATCC 43068 / DSM 8971 / 11B)).